A 459-amino-acid polypeptide reads, in one-letter code: ATP synthase subunit beta (459 aa).

148 to 155 is an ATP binding site; that stretch reads GGAGVGKT.

This sequence belongs to the ATPase alpha/beta chains family. F-type ATPases have 2 components, CF(1) - the catalytic core - and CF(0) - the membrane proton channel. CF(1) has five subunits: alpha(3), beta(3), gamma(1), delta(1), epsilon(1). CF(0) has three main subunits: a(1), b(2) and c(9-12). The alpha and beta chains form an alternating ring which encloses part of the gamma chain. CF(1) is attached to CF(0) by a central stalk formed by the gamma and epsilon chains, while a peripheral stalk is formed by the delta and b chains.

The protein localises to the cell inner membrane. The catalysed reaction is ATP + H2O + 4 H(+)(in) = ADP + phosphate + 5 H(+)(out). Produces ATP from ADP in the presence of a proton gradient across the membrane. The catalytic sites are hosted primarily by the beta subunits. This is ATP synthase subunit beta from Thiobacillus denitrificans (strain ATCC 25259 / T1).